A 119-amino-acid polypeptide reads, in one-letter code: Putative F420H(2)-dependent quinone reductase Rv3178 (119 aa).

Coenzyme F420-(gamma-Glu)n contacts are provided by residues 21–23 (RKS), 27–32 (FVAPLL), 43–46 (VASA), and 54–58 (QWYRN).

The protein belongs to the F420H(2)-dependent quinone reductase family.

It localises to the cell membrane. The enzyme catalyses oxidized coenzyme F420-(gamma-L-Glu)(n) + a quinol + H(+) = reduced coenzyme F420-(gamma-L-Glu)(n) + a quinone. Functionally, involved in a F420-dependent anti-oxidant mechanism that protects M.tuberculosis against oxidative stress and bactericidal agents. Catalyzes the F420H(2)-dependent two-electron reduction of quinones to dihydroquinones, thereby preventing the formation of cytotoxic semiquinones obtained by the one-electron reduction pathway. Since menaquinone is the sole quinone electron carrier in the respiratory chain in M.tuberculosis, the physiological electron acceptor for Fqr-mediated F420H(2) oxidation is therefore likely to be the endogenous menaquinone found in the membrane fraction of M.tuberculosis. In Mycobacterium tuberculosis (strain ATCC 25618 / H37Rv), this protein is Putative F420H(2)-dependent quinone reductase Rv3178.